The sequence spans 337 residues: GTP 3',8-cyclase (337 aa).

A Radical SAM core domain is found at 17–243 (PFQRQYYYLR…HKSHTDGPAK (227 aa)). A GTP-binding site is contributed by arginine 26. [4Fe-4S] cluster contacts are provided by cysteine 33 and cysteine 37. An S-adenosyl-L-methionine-binding site is contributed by tyrosine 39. Residue cysteine 40 participates in [4Fe-4S] cluster binding. A GTP-binding site is contributed by arginine 76. Glycine 80 lines the S-adenosyl-L-methionine pocket. Position 107 (threonine 107) interacts with GTP. Serine 131 lines the S-adenosyl-L-methionine pocket. Lysine 168 is a binding site for GTP. Methionine 202 provides a ligand contact to S-adenosyl-L-methionine. [4Fe-4S] cluster is bound by residues cysteine 265 and cysteine 268. 270 to 272 (RLR) lines the GTP pocket. Position 282 (cysteine 282) interacts with [4Fe-4S] cluster.

It belongs to the radical SAM superfamily. MoaA family. In terms of assembly, monomer and homodimer. The cofactor is [4Fe-4S] cluster.

The enzyme catalyses GTP + AH2 + S-adenosyl-L-methionine = (8S)-3',8-cyclo-7,8-dihydroguanosine 5'-triphosphate + 5'-deoxyadenosine + L-methionine + A + H(+). It participates in cofactor biosynthesis; molybdopterin biosynthesis. Functionally, catalyzes the cyclization of GTP to (8S)-3',8-cyclo-7,8-dihydroguanosine 5'-triphosphate. This Haemophilus influenzae (strain ATCC 51907 / DSM 11121 / KW20 / Rd) protein is GTP 3',8-cyclase.